A 69-amino-acid chain; its full sequence is DNA-directed RNA polymerase subunit epsilon (69 aa).

The protein belongs to the RNA polymerase subunit epsilon family. As to quaternary structure, RNAP is composed of a core of 2 alpha, a beta and a beta' subunit. The core is associated with a delta subunit, and at least one of epsilon or omega. When a sigma factor is associated with the core the holoenzyme is formed, which can initiate transcription.

The enzyme catalyses RNA(n) + a ribonucleoside 5'-triphosphate = RNA(n+1) + diphosphate. Its function is as follows. A non-essential component of RNA polymerase (RNAP). In Lysinibacillus sphaericus (strain C3-41), this protein is DNA-directed RNA polymerase subunit epsilon.